The following is a 334-amino-acid chain: MTPLDAKRPLQLNHQGQLRHFLSLDGLPRELLTEILDTADSFLEVGARAVKKVPLLRGKTVCNVFFENSTRTRTTFELAAQRLSADVITLNVSTSSTSKGETLFDTLRNLEAMAADMFVVRHADSGAAHFIAEHVCPDVAIINGGDGRHAHPTQGMLDMLTIRRHKGGFENLSVAIVGDILHSRVARSNMIALKALGCPDIRVIGPKTLLPVGVEQYGVKVYTDLNEGLKDVDVVIMLRLQRERMTGGLLPSEGEFYRLFGLTTARLAGAKPDAIVMHPGPINRGVEIESAVADGAHSVILNQVTYGIAIRMAVLSMAMSGQNAQRQFEQENAQ.

2 residues coordinate carbamoyl phosphate: Arg-71 and Thr-72. Lys-99 is an L-aspartate binding site. 3 residues coordinate carbamoyl phosphate: Arg-121, His-151, and Gln-154. The L-aspartate site is built by Arg-184 and Arg-239. The carbamoyl phosphate site is built by Gly-280 and Pro-281.

This sequence belongs to the aspartate/ornithine carbamoyltransferase superfamily. ATCase family. Heterododecamer (2C3:3R2) of six catalytic PyrB chains organized as two trimers (C3), and six regulatory PyrI chains organized as three dimers (R2).

It catalyses the reaction carbamoyl phosphate + L-aspartate = N-carbamoyl-L-aspartate + phosphate + H(+). Its pathway is pyrimidine metabolism; UMP biosynthesis via de novo pathway; (S)-dihydroorotate from bicarbonate: step 2/3. Functionally, catalyzes the condensation of carbamoyl phosphate and aspartate to form carbamoyl aspartate and inorganic phosphate, the committed step in the de novo pyrimidine nucleotide biosynthesis pathway. The polypeptide is Aspartate carbamoyltransferase catalytic subunit (Pseudomonas syringae pv. tomato (strain ATCC BAA-871 / DC3000)).